Here is a 101-residue protein sequence, read N- to C-terminus: 2-amino-4-ketopentanoate thiolase alpha subunit (101 aa).

Belongs to the OrtA family. Heterodimer with OrtB.

The enzyme catalyses D-alanine + acetyl-CoA = (2R)-2-amino-4-oxopentanoate + CoA. Completely inhibited by p-chloromercuribenzoate (p-ClHgBzO) and acetyl-CoA, and partially inhibited by N-ethylmaleimide. Involved in the ornithine fermentation pathway. Catalyzes the thiolytic cleavage of 2-amino-4-ketopentanoate (AKP) with coenzyme A (CoA) to form acetyl-CoA and alanine. It is strictly specific for AKP. In Acetoanaerobium sticklandii (strain ATCC 12662 / DSM 519 / JCM 1433 / CCUG 9281 / NCIMB 10654 / HF) (Clostridium sticklandii), this protein is 2-amino-4-ketopentanoate thiolase alpha subunit.